The following is a 354-amino-acid chain: NAD-dependent epimerase/dehydratase ALT6 (354 aa).

The NADP(+) site is built by Lys41 and Tyr174.

This sequence belongs to the NAD(P)-dependent epimerase/dehydratase family. Dihydroflavonol-4-reductase subfamily.

Its pathway is mycotoxin biosynthesis. Its function is as follows. NAD-dependent epimerase/dehydratase; part of the gene cluster that mediates the biosynthesis of the host-selective toxins (HSTs) AAL-toxins, sphinganine-analog mycotoxins responsible for Alternaria stem canker on tomato by the tomato pathotype. The biosynthesis starts with the polyketide synthase ALT1-catalyzed C-16 carbon chain assembly from one starter acetyl-CoA unit with malonyl-CoA extender units. ALT1 also selectively transfers methyl groups at the first and the third cycle of chain elongation for AAL toxin. The C-16 polyketide chain is released from the enzyme by a nucleophilic attack of a carbanion, which is derived from R-carbon of glycin by decarboxylation, on the carbonyl carbon of polyketide acyl chain. This step is probably catalyzed by a pyridoxal 5'-phosphate-dependent aminoacyl transferase ALT4. The respective functions of the other enzymes encoded by the cluster have still to be elucidated. The sphingosine N-acyltransferase-like protein ALT7 seems not to act as a resistance/self-tolerance factor against the toxin in the toxin biosynthetic gene cluster, contrary to what is expected. The polypeptide is NAD-dependent epimerase/dehydratase ALT6 (Alternaria alternata (Alternaria rot fungus)).